The following is an 819-amino-acid chain: Protein SCARECROW (819 aa).

Disordered stretches follow at residues 6–49 (LFNG…HSER), 65–136 (HNNN…INNN), 212–231 (SQNNQTNRTNNNSSNNRNNT), and 393–420 (PLSTQQDQQHQLQQHPEDLAPATTTTTT). The span at 15-33 (TTPDETNNNSTSNSSNIST) shows a compositional bias: low complexity. Positions 79-98 (RTNNTSSLNCSLPATTQKGV) are enriched in polar residues. The segment covering 99–136 (TTTTTTTLASSGNNNNNNNNNNNYHYHNNNNNSIINNN) has biased composition (low complexity). Residues 418-448 (TTTSAELALARKKKEEIKEQKKKDEEGLHLL) are a coiled coil. In terms of domain architecture, GRAS spans 438–806 (KKKDEEGLHL…LCLLTASAWR (369 aa)). The leucine repeat I (LRI) stretch occupies residues 445–507 (LHLLTLLLQC…RLVSSCLGIY (63 aa)). Residues 452-456 (LQCAE) carry the LxCxE motif motif. The segment at 526 to 591 (FQVFNGISPF…GGPPYVRLTG (66 aa)) is VHIID. Residues 557-561 (VHIID) carry the VHIID motif. A leucine repeat II (LRII) region spans residues 601 to 633 (ATGKRLSDFANKLGLPFEFFPVAEKVGNIDVEK). The tract at residues 642-729 (VAVHWLQHSL…QQLLSREIRN (88 aa)) is PFYRE. The segment at 732–806 (AVGGPSRSGE…LCLLTASAWR (75 aa)) is SAW.

Belongs to the GRAS family. As to expression, expressed in shoot apical meristem, leaf primordia, between the cortex and the differentiating vessels in lower shoots and in root endodermis.

The protein resides in the nucleus. Its function is as follows. Putative transcription factor involved in asymmetric cell division. This chain is Protein SCARECROW (SCR), found in Pisum sativum (Garden pea).